The chain runs to 144 residues: L-fucose mutarotase (144 aa).

The Proton donor role is filled by H22. Residues D30, R109, and 131-133 each bind substrate; that span reads YGN.

It belongs to the RbsD / FucU family. FucU mutarotase subfamily. In terms of assembly, homodecamer.

Its subcellular location is the cytoplasm. It catalyses the reaction alpha-L-fucose = beta-L-fucose. Its pathway is carbohydrate metabolism; L-fucose metabolism. Its function is as follows. Involved in the anomeric conversion of L-fucose. The sequence is that of L-fucose mutarotase from Histophilus somni (strain 2336) (Haemophilus somnus).